Here is a 246-residue protein sequence, read N- to C-terminus: Probable transcriptional regulatory protein KPK_1906 (246 aa).

The protein belongs to the TACO1 family.

The protein resides in the cytoplasm. The sequence is that of Probable transcriptional regulatory protein KPK_1906 from Klebsiella pneumoniae (strain 342).